The following is a 224-amino-acid chain: LexA repressor (224 aa).

Residues 31-51 (RAEIAAEFGFKSANAAEEHLQ) constitute a DNA-binding region (H-T-H motif). Residues Ser-142 and Lys-179 each act as for autocatalytic cleavage activity in the active site.

The protein belongs to the peptidase S24 family. As to quaternary structure, homodimer.

It catalyses the reaction Hydrolysis of Ala-|-Gly bond in repressor LexA.. Represses a number of genes involved in the response to DNA damage (SOS response), including recA and lexA. In the presence of single-stranded DNA, RecA interacts with LexA causing an autocatalytic cleavage which disrupts the DNA-binding part of LexA, leading to derepression of the SOS regulon and eventually DNA repair. In Paracidovorax citrulli (strain AAC00-1) (Acidovorax citrulli), this protein is LexA repressor.